Here is a 183-residue protein sequence, read N- to C-terminus: Adenine phosphoribosyltransferase 3 (183 aa).

Belongs to the purine/pyrimidine phosphoribosyltransferase family. Homodimer.

It is found in the cytoplasm. It catalyses the reaction AMP + diphosphate = 5-phospho-alpha-D-ribose 1-diphosphate + adenine. Its pathway is purine metabolism; AMP biosynthesis via salvage pathway; AMP from adenine: step 1/1. In terms of biological role, catalyzes a salvage reaction resulting in the formation of AMP, that is energically less costly than de novo synthesis. May contribute to the recycling of adenine into adenylate nucleotides and the inactivation of cytokinins by phosphoribosylation. Possesses low activity toward adenine and cytokinins. This chain is Adenine phosphoribosyltransferase 3 (APT3), found in Arabidopsis thaliana (Mouse-ear cress).